A 606-amino-acid polypeptide reads, in one-letter code: Endonuclease 8-like 3 (606 aa).

The active-site Schiff-base intermediate with DNA; via amino nitrogen is the valine 2. Residues 31 to 51 (ALQGLGGPGSPPAAPGPMGTS) are disordered. Positions 194 and 273 each coordinate DNA. The FPG-type zinc finger occupies 249–283 (KVYKRPNCGQCCCKITVCRLGENNRMTYFCPHCQK). Residues 319-348 (SEEQWTCEVCTLINKLSSKTCDACLTSRPA) form a RanBP2-type zinc finger. Position 451 is a phosphoserine (serine 451). Positions 508, 511, 534, 542, 555, 557, 580, and 588 each coordinate Zn(2+). GRF-type zinc fingers lie at residues 508 to 551 (CSKH…ADLS) and 555 to 597 (CNHG…AQNG).

This sequence belongs to the FPG family.

The protein localises to the nucleus. Its subcellular location is the chromosome. It catalyses the reaction 2'-deoxyribonucleotide-(2'-deoxyribose 5'-phosphate)-2'-deoxyribonucleotide-DNA = a 3'-end 2'-deoxyribonucleotide-(2,3-dehydro-2,3-deoxyribose 5'-phosphate)-DNA + a 5'-end 5'-phospho-2'-deoxyribonucleoside-DNA + H(+). Its function is as follows. DNA glycosylase which prefers single-stranded DNA (ssDNA), or partially ssDNA structures such as bubble and fork structures, to double-stranded DNA (dsDNA). Mediates interstrand cross-link repair in response to replication stress: acts by mediating DNA glycosylase activity, cleaving one of the two N-glycosyl bonds comprising the interstrand cross-link, which avoids the formation of a double-strand break but generates an abasic site that is bypassed by translesion synthesis polymerases. In vitro, displays strong glycosylase activity towards the hydantoin lesions spiroiminodihydantoin (Sp) and guanidinohydantoin (Gh) in both ssDNA and dsDNA; also recognizes FapyA, FapyG, 5-OHU, 5-OHC, 5-OHMH, Tg and 8-oxoA lesions in ssDNA. No activity on 8-oxoG detected. Also shows weak DNA-(apurinic or apyrimidinic site) lyase activity. In vivo, appears to be the primary enzyme involved in removing Sp and Gh from ssDNA in neonatal tissues. The polypeptide is Endonuclease 8-like 3 (NEIL3) (Bos taurus (Bovine)).